Here is a 382-residue protein sequence, read N- to C-terminus: MNNFVKQVASKSLKPTKKLSPLDEVISLNECIISFNLDNFYYCNDGLFTKPINTPEDVLKSLLIMESFAYEKMIIKGLIKILISRAYINDIYFTPFGWLTGVDDDPETHVVIKIIFNSSLISIKSQVIEYLKPYNVNNLSVLTTEKELSINTFNVPDSIPISIISFFPFDTDFILVILFFGVYNDSYCGISYISPKERLPYIIEILKPLVLEINMLSDEIGRTSSIRIFNSTSVKKFPTNTLTSICEIVYSFDESSFTTPKTFTPLNASPYIPKKIVSLLDLPSNVEIKAISRSGVDFITHINNKRLTTILVIAKDNFLKNSTFSGTFIKENIIWKGIYTYRIIKSSFPVPTIKSVTNKKKICKKHCFVNSQYTTRTLSHIL.

It belongs to the orthopoxvirus OPG082 family.

The protein localises to the virion. Binds to the hairpin form of the viral telomeric sequence. Might direct genome encapsidation into the virus particle. In Monkeypox virus, this protein is Telomere-binding protein OPG082 (OPG082).